The following is a 961-amino-acid chain: Thrombospondin-4 (961 aa).

An N-terminal signal peptide occupies residues 1–23; that stretch reads MLAPRGATFLLLHLALQPWLGAG. The Laminin G-like domain maps to 24–192; the sequence is AQATPQVFDL…LEELKLVVRG (169 aa). The EGF-like 1 domain occupies 286-325; it reads PVRRCDSNPCFRGVRCTDTRDGFQCGPCPEGYTGNGIVCS. 21 disulfides stabilise this stretch: cysteine 290/cysteine 301, cysteine 295/cysteine 310, cysteine 313/cysteine 324, cysteine 330/cysteine 341, cysteine 335/cysteine 350, cysteine 353/cysteine 377, cysteine 383/cysteine 394, cysteine 388/cysteine 403, cysteine 406/cysteine 418, cysteine 424/cysteine 438, cysteine 432/cysteine 448, cysteine 450/cysteine 461, cysteine 477/cysteine 482, cysteine 487/cysteine 507, cysteine 523/cysteine 543, cysteine 546/cysteine 566, cysteine 582/cysteine 602, cysteine 605/cysteine 625, cysteine 643/cysteine 663, cysteine 683/cysteine 703, and cysteine 719/cysteine 940. Residues 326–363 enclose the EGF-like 2; calcium-binding domain; the sequence is DVDECRYHPCYPGVRCVNLAPGFRCDACPVGFTGPMMQ. Positions 379-419 constitute an EGF-like 3; calcium-binding domain; the sequence is DIDECRNGACVLNSICINTLGSYRCGPCKPGYIGDQMRGCK. Positions 420–462 constitute an EGF-like 4 domain; that stretch reads MERNCRDPELNPCSVNAQCIEERQGDVTCVCGVGWAGDGYICG. TSP type-3 repeat units lie at residues 463–495, 496–531, 532–554, 555–590, 591–613, 614–651, 652–691, and 692–727; these read KDVDIDSYPDEELPCSARNCKKDNCKYVPNSGQ, EDADRDGIGDACDDDADGDGILNEQDNCVLTHNVDQ, RNSDKDIFGDACDNCRNVLNNDQ, KDTDGDGKGDACDDDMDGDGIKNILDNCQKVPNSDQ, EDRDGDGVGDACDSCPEVSNPNQ, SDVDNDLVGDSCDTNQDSDGDGHQDSTDNCPTVINSAQ, LDTDKDGIGDECDDDDDNDGIPDLVPPGPDNCRLVPNPAQ, and EDSNSDGVGDICEADFDQDQVIDRIDVCPENAEVTL. The Cell attachment site motif lies at 562-564; sequence KGD. The interval 581 to 671 is disordered; the sequence is NCQKVPNSDQ…ECDDDDDNDG (91 aa). N-linked (GlcNAc...) asparagine glycosylation occurs at asparagine 612. Residues 640-652 show a composition bias toward polar residues; that stretch reads TDNCPTVINSAQL. Residues 660-671 are compositionally biased toward acidic residues; the sequence is GDECDDDDDNDG. In terms of domain architecture, TSP C-terminal spans 731–945; sequence RAYQTVVLDP…LKYRCNDTIP (215 aa). A glycan (N-linked (GlcNAc...) asparagine) is linked at asparagine 941.

This sequence belongs to the thrombospondin family. In terms of assembly, homopentamer; disulfide-linked. Interacts with PTBP3. Interacts (via EGF-like 3; calcium-binding domain) with ATF6 and facilitates its processing, activation and nuclear translocation. Interacts with NOTCH1.

It is found in the endoplasmic reticulum. It localises to the sarcoplasmic reticulum. The protein localises to the secreted. Its subcellular location is the extracellular space. The protein resides in the extracellular matrix. Its function is as follows. Adhesive glycoprotein that mediates cell-to-cell and cell-to-matrix interactions and is involved in various processes including cellular proliferation, migration, adhesion and attachment, inflammatory response to CNS injury, regulation of vascular inflammation and adaptive responses of the heart to pressure overload and in myocardial function and remodeling. Binds to structural extracellular matrix (ECM) proteins and modulates the ECM in response to tissue damage, contributing to cardioprotective and adaptive ECM remodeling. Plays a role in ER stress response, via its interaction with the activating transcription factor 6 alpha (ATF6) which produces adaptive ER stress response factors and protects myocardium from pressure overload. May contribute to spinal presynaptic hypersensitivity and neuropathic pain states after peripheral nerve injury. May play a role in regulating protective astrogenesis from the subventricular zone (SVZ) niche after injury in a NOTCH1-dependent manner. This is Thrombospondin-4 (THBS4) from Bos taurus (Bovine).